The chain runs to 222 residues: 2-amino-5-formylamino-6-ribosylaminopyrimidin-4(3H)-one 5'-monophosphate deformylase (222 aa).

4 residues coordinate Fe cation: E29, H31, D40, and H108.

Belongs to the creatininase superfamily. FAPy deformylase family. As to quaternary structure, homodimer. Requires Fe(2+) as cofactor. It depends on Zn(2+) as a cofactor.

The catalysed reaction is 2-amino-5-formylamino-6-(5-phospho-D-ribosylamino)pyrimidin-4(3H)-one + H2O = 2,5-diamino-6-(1-D-ribosylamino)pyrimidin-4(3H)-one 5'-phosphate + formate + H(+). The protein operates within cofactor biosynthesis; coenzyme F420 biosynthesis. Its pathway is cofactor biosynthesis; riboflavin biosynthesis. Functionally, catalyzes the hydrolysis of the formamide of 2-amino-5-formylamino-6-ribosylamino-4(3H)-pyrimidinone 5'-monophosphate (FAPy) to form 2,5-diamino-6-ribosylamino-4(3H)-pyrimidinone 5'-phosphate (APy). The protein is 2-amino-5-formylamino-6-ribosylaminopyrimidin-4(3H)-one 5'-monophosphate deformylase of Methanocaldococcus infernus (strain DSM 11812 / JCM 15783 / ME).